A 167-amino-acid chain; its full sequence is L-alanine exporter AlaE (167 aa).

4 helical membrane passes run 25 to 45, 50 to 70, 105 to 125, and 129 to 149; these read GTEF…TGII, IAGM…ALMI, FQVP…GGLV, and LGAA…LNWV.

It belongs to the AlaE exporter family.

It localises to the cell inner membrane. In terms of biological role, exports L-alanine. This is L-alanine exporter AlaE from Pantoea sp. (strain At-9b).